A 264-amino-acid chain; its full sequence is Acetyl-coenzyme A carboxylase carboxyl transferase subunit beta (264 aa).

One can recognise a CoA carboxyltransferase N-terminal domain in the interval 4-264 (LWVKCKQCQQ…CGNSLEGVES (261 aa)). Zn(2+) contacts are provided by C8, C11, C27, and C29. Residues 8–29 (CKQCQQILLTKELEKNLKVCRC) form a C4-type zinc finger.

Belongs to the AccD/PCCB family. Acetyl-CoA carboxylase is a heterohexamer composed of biotin carboxyl carrier protein (AccB), biotin carboxylase (AccC) and two subunits each of ACCase subunit alpha (AccA) and ACCase subunit beta (AccD). Requires Zn(2+) as cofactor.

The protein localises to the cytoplasm. It carries out the reaction N(6)-carboxybiotinyl-L-lysyl-[protein] + acetyl-CoA = N(6)-biotinyl-L-lysyl-[protein] + malonyl-CoA. Its pathway is lipid metabolism; malonyl-CoA biosynthesis; malonyl-CoA from acetyl-CoA: step 1/1. Functionally, component of the acetyl coenzyme A carboxylase (ACC) complex. Biotin carboxylase (BC) catalyzes the carboxylation of biotin on its carrier protein (BCCP) and then the CO(2) group is transferred by the transcarboxylase to acetyl-CoA to form malonyl-CoA. The polypeptide is Acetyl-coenzyme A carboxylase carboxyl transferase subunit beta (Heliobacterium modesticaldum (strain ATCC 51547 / Ice1)).